The following is a 221-amino-acid chain: Histone H1.3 (221 aa).

The segment covering 1-17 has biased composition (low complexity); that stretch reads MSETAPAAPAAPAPVEK. The disordered stretch occupies residues 1 to 42; it reads MSETAPAAPAAPAPVEKTPVKKKAKKTGAAAGKRKASGPPVS. An N-acetylserine modification is found at S2. S2 is modified (phosphoserine). K17 bears the N6-acetyllysine mark. T18 carries the phosphothreonine modification. Residues 20–36 are compositionally biased toward basic residues; it reads VKKKAKKTGAAAGKRKA. N6-(beta-hydroxybutyryl)lysine is present on residues K33, K35, and K53. The H15 domain maps to 37–110; the sequence is SGPPVSELIT…GASGSFKLNK (74 aa). R55 bears the Citrulline mark. Residues K65, K86, and K91 each carry the N6-(beta-hydroxybutyryl)lysine modification. The tract at residues 92–221 is disordered; the sequence is GTLVQTKGTG…KAKKAAPRKK (130 aa). Residue S105 is modified to Phosphoserine; by PKC. N6-(beta-hydroxybutyryl)lysine occurs at positions 107 and 141. Basic residues-rich tracts occupy residues 120-141, 150-161, 170-187, and 194-221; these read KAKKAGAAKAKKPAGAAKKPKK, KTAKKTPKKAKK, KVSKSPKKVKAAKPKKAA, and KAPKAKASKPKASKPKATKAKKAAPRKK.

The protein belongs to the histone H1/H5 family. In terms of processing, H1 histones are progressively phosphorylated during the cell cycle, becoming maximally phosphorylated during late G2 phase and M phase, and being dephosphorylated sharply thereafter. Hydroxybutyrylation of histones is induced by starvation. Post-translationally, citrullination at Arg-55 (H1R54ci) by PADI4 takes place within the DNA-binding site of H1 and results in its displacement from chromatin and global chromatin decondensation, thereby promoting pluripotency and stem cell maintenance.

Its subcellular location is the nucleus. The protein localises to the chromosome. Histone H1 protein binds to linker DNA between nucleosomes forming the macromolecular structure known as the chromatin fiber. Histones H1 are necessary for the condensation of nucleosome chains into higher-order structured fibers. Also acts as a regulator of individual gene transcription through chromatin remodeling, nucleosome spacing and DNA methylation. This is Histone H1.3 from Mus musculus (Mouse).